The following is a 172-amino-acid chain: Bifunctional protein PyrR (172 aa).

Residues 90–102 carry the PRPP-binding motif; sequence LVLIDDVLMSGRT.

Belongs to the purine/pyrimidine phosphoribosyltransferase family. PyrR subfamily.

The enzyme catalyses UMP + diphosphate = 5-phospho-alpha-D-ribose 1-diphosphate + uracil. Functionally, regulates the transcription of the pyrimidine nucleotide (pyr) operon in response to exogenous pyrimidines. In terms of biological role, also displays a weak uracil phosphoribosyltransferase activity which is not physiologically significant. The protein is Bifunctional protein PyrR of Pseudomonas putida (strain W619).